A 407-amino-acid chain; its full sequence is Imidazolonepropionase (407 aa).

Residues His-74 and His-76 each contribute to the Fe(3+) site. Positions 74 and 76 each coordinate Zn(2+). 4-imidazolone-5-propanoate is bound by residues Arg-83, Tyr-146, and His-179. Residue Tyr-146 coordinates N-formimidoyl-L-glutamate. His-244 provides a ligand contact to Fe(3+). Zn(2+) is bound at residue His-244. 4-imidazolone-5-propanoate is bound at residue Gln-247. Residue Asp-319 participates in Fe(3+) binding. Asp-319 lines the Zn(2+) pocket. Residues Asn-321 and Gly-323 each coordinate N-formimidoyl-L-glutamate. Thr-324 is a binding site for 4-imidazolone-5-propanoate.

This sequence belongs to the metallo-dependent hydrolases superfamily. HutI family. It depends on Zn(2+) as a cofactor. Fe(3+) serves as cofactor.

It is found in the cytoplasm. The catalysed reaction is 4-imidazolone-5-propanoate + H2O = N-formimidoyl-L-glutamate. It functions in the pathway amino-acid degradation; L-histidine degradation into L-glutamate; N-formimidoyl-L-glutamate from L-histidine: step 3/3. In terms of biological role, catalyzes the hydrolytic cleavage of the carbon-nitrogen bond in imidazolone-5-propanoate to yield N-formimidoyl-L-glutamate. It is the third step in the universal histidine degradation pathway. The protein is Imidazolonepropionase of Salmonella agona (strain SL483).